The chain runs to 196 residues: Putative adenylate kinase (196 aa).

ATP-binding residues include glycine 10, glycine 12, lysine 13, threonine 14, and serine 15. The interval 30-53 (YLNDLIKEEHLYSEVDEERDSVIA) is NMP. The interval 118–128 (KRGYSEEKINE) is LID. Residue arginine 119 coordinates ATP.

This sequence belongs to the adenylate kinase family. AK6 subfamily. As to quaternary structure, interacts with uS11. Not a structural component of 40S pre-ribosomes, but transiently interacts with them by binding to uS11.

The catalysed reaction is AMP + ATP = 2 ADP. The enzyme catalyses ATP + H2O = ADP + phosphate + H(+). In terms of biological role, broad-specificity nucleoside monophosphate (NMP) kinase that catalyzes the reversible transfer of the terminal phosphate group between nucleoside triphosphates and monophosphates. Also has ATPase activity. Involved in the late maturation steps of the 30S ribosomal particles, specifically 16S rRNA maturation. While NMP activity is not required for ribosome maturation, ATPase activity is. Associates transiently with small ribosomal subunit protein uS11. ATP hydrolysis breaks the interaction with uS11. May temporarily remove uS11 from the ribosome to enable a conformational change of the ribosomal RNA that is needed for the final maturation step of the small ribosomal subunit. The polypeptide is Putative adenylate kinase (Methanosarcina mazei (strain ATCC BAA-159 / DSM 3647 / Goe1 / Go1 / JCM 11833 / OCM 88) (Methanosarcina frisia)).